Consider the following 500-residue polypeptide: Probable cation transporter HKT1;4 (500 aa).

The Cytoplasmic segment spans residues 1-12 (MPTSRRALAGGA). Transmembrane regions (helical) follow at residues 13 to 33 (LSMH…LLGV) and 74 to 94 (LVVL…LVGL). The Cytoplasmic segment spans residues 95–156 (ASKWSKLRSD…ADTLRHNAVR (62 aa)). Residues 121 to 145 (ADIDGGDVENPTSSGEEAASRRRPM) are disordered. The next 2 membrane-spanning stretches (helical) occupy residues 157 to 177 (ALFY…AVAV) and 239 to 259 (VLAG…AAAA). The Cytoplasmic segment spans residues 260 to 290 (ATRREELVEMAREGGRAAAAGYAHLMPARRC). Helical transmembrane passes span 291–311 (WMLA…VCGM) and 346–366 (LSIL…LPPY). At 367–390 (TTWFPFEENSTTKDSNAENQGIRL) the chain is on the cytoplasmic side. 2 helical membrane-spanning segments follow: residues 391–411 (LEST…AICI) and 464–484 (GFVG…MFFG). Residues 485-500 (RLKKFSMKGGKAWKLS) are Cytoplasmic-facing.

It belongs to the TrkH potassium transport family. HKT (TC 2.A.38.3) subfamily.

Its subcellular location is the membrane. Probable cation transporter. May be involved in regulation of potassium-sodium homeostasis. This chain is Probable cation transporter HKT1;4, found in Oryza sativa subsp. japonica (Rice).